The sequence spans 525 residues: Glutamate--cysteine ligase (525 aa).

This sequence belongs to the glutamate--cysteine ligase type 1 family. Type 1 subfamily.

The enzyme catalyses L-cysteine + L-glutamate + ATP = gamma-L-glutamyl-L-cysteine + ADP + phosphate + H(+). It functions in the pathway sulfur metabolism; glutathione biosynthesis; glutathione from L-cysteine and L-glutamate: step 1/2. This is Glutamate--cysteine ligase from Pseudoalteromonas translucida (strain TAC 125).